Here is a 228-residue protein sequence, read N- to C-terminus: MQKLKQQVFEANMDLPRYGLVTFTWGNVSAIDRERGLVVIKPSGVAYETMKADDMVVVDMSGKVVEGAYRPSSDTATHLELYRRCPSLGGIVHTHSTHATAWAQAGLAIPALGTTHADYFFGDIPCTRGLSEEEVQGEYELNTGKVIIETLGNAEPLHTPGIVVYQHGPFAWGKDAHDAVHNAVVMEEVAKMAWIARGINPQLNHIDSFLMNKHFMRKHGPNAYYGQK.

Substrate is bound by residues 26 to 27, 43 to 44, and 72 to 73; these read GN, SG, and SS. 3 residues coordinate Zn(2+): aspartate 74, histidine 93, and histidine 95. The active-site Proton donor/acceptor is the aspartate 118. Histidine 167 provides a ligand contact to Zn(2+). Tyrosine 225 (proton donor/acceptor) is an active-site residue.

This sequence belongs to the aldolase class II family. AraD/FucA subfamily. It depends on Zn(2+) as a cofactor.

It catalyses the reaction L-ribulose 5-phosphate = D-xylulose 5-phosphate. It participates in cofactor degradation; L-ascorbate degradation; D-xylulose 5-phosphate from L-ascorbate: step 4/4. In terms of biological role, catalyzes the isomerization of L-ribulose 5-phosphate to D-xylulose 5-phosphate. Is involved in the anaerobic L-ascorbate utilization. The polypeptide is L-ribulose-5-phosphate 4-epimerase UlaF (Escherichia coli O8 (strain IAI1)).